Consider the following 321-residue polypeptide: Bifunctional ligase/repressor BirA (321 aa).

A DNA-binding region (H-T-H motif) is located at residues 22-41 (GEQLGETLGMSRAAINKHIQ). In terms of domain architecture, BPL/LPL catalytic spans 67 to 254 (LNAKQILGQL…ELRAALELFE (188 aa)). Biotin contacts are provided by residues 89 to 91 (STN), Q112, 116 to 118 (RGR), and K183.

Belongs to the biotin--protein ligase family. Monomer in solution. Interacts with BCCP. Homodimerizes to bind DNA. Interaction with the corepressor bio-5'-AMP increases dimerization.

It catalyses the reaction biotin + L-lysyl-[protein] + ATP = N(6)-biotinyl-L-lysyl-[protein] + AMP + diphosphate + H(+). Its activity is regulated as follows. The switch between the enzymatic activity and the repressor activity is regulated by cellular demand for biotin. The switch occurs by swapping of protein interaction partners by holoBirA. In conditions of high biotin demand, holoBirA associates with apoBCCP to transfer biotin. In conditions of low biotin demand, holoBirA dimerizes, binds DNA and represses transcription of the biotin operon. In terms of biological role, acts both as a biotin--[acetyl-CoA-carboxylase] ligase and a biotin-operon repressor. In the presence of ATP, BirA activates biotin to form the BirA-biotinyl-5'-adenylate (BirA-bio-5'-AMP or holoBirA) complex. HoloBirA can either transfer the biotinyl moiety to the biotin carboxyl carrier protein (BCCP) subunit of acetyl-CoA carboxylase, or bind to the biotin operator site and inhibit transcription of the operon. The protein is Bifunctional ligase/repressor BirA of Escherichia coli (strain K12).